The sequence spans 229 residues: Cytidylate kinase (229 aa).

12–20 serves as a coordination point for ATP; sequence GPSGTGKSS.

It belongs to the cytidylate kinase family. Type 1 subfamily.

Its subcellular location is the cytoplasm. The catalysed reaction is CMP + ATP = CDP + ADP. It carries out the reaction dCMP + ATP = dCDP + ADP. The chain is Cytidylate kinase from Rhodococcus jostii (strain RHA1).